A 159-amino-acid polypeptide reads, in one-letter code: Urease subunit beta 2 (159 aa).

The disordered stretch occupies residues 1–23; it reads MAKEPTEAAHPQPEQTKTNHKAH.

The protein belongs to the urease beta subunit family. As to quaternary structure, heterotrimer of UreA (gamma), UreB (beta) and UreC (alpha) subunits. Three heterotrimers associate to form the active enzyme.

The protein localises to the cytoplasm. The catalysed reaction is urea + 2 H2O + H(+) = hydrogencarbonate + 2 NH4(+). The protein operates within nitrogen metabolism; urea degradation; CO(2) and NH(3) from urea (urease route): step 1/1. The chain is Urease subunit beta 2 from Brucella abortus biovar 1 (strain 9-941).